The sequence spans 436 residues: UPF0597 protein YhaM (436 aa).

Belongs to the UPF0597 family.

This chain is UPF0597 protein YhaM, found in Shigella dysenteriae serotype 1 (strain Sd197).